The primary structure comprises 1074 residues: Transmembrane protein 132E (1074 aa).

The first 25 residues, 1–25 (MAPGMSGRGGAALLCLSALLAHASG), serve as a signal peptide directing secretion. Topologically, residues 26–893 (RSHPASPSPP…LTDLEIGMYA (868 aa)) are extracellular. Residues Asn70 and Asn91 are each glycosylated (N-linked (GlcNAc...) asparagine). Disordered stretches follow at residues 202-226 (PPAP…ATGE) and 241-264 (ASGG…ESPT). The segment covering 243–256 (GGCGGSRRGAGPGV) has biased composition (gly residues). Residues Asn318 and Asn399 are each glycosylated (N-linked (GlcNAc...) asparagine). 2 disordered regions span residues 563–585 (RSVR…ASRG) and 814–867 (GRDE…VPPT). Residues 841–862 (GAGPPGSALPAPEAPGPGTASP) are compositionally biased toward low complexity. A helical transmembrane segment spans residues 894–914 (LLGVFCLAILVFLINCIVFVL). The Cytoplasmic portion of the chain corresponds to 915–1074 (RYRHKRIPPE…NYMRRIKEIA (160 aa)). A disordered region spans residues 946-1063 (VQGELSPPAG…PTRPTAPPDL (118 aa)). A compositionally biased stretch (low complexity) spans 972 to 984 (SGSSQTSVQSQVH). Residues 1034–1044 (GEEDEEEEEDL) are compositionally biased toward acidic residues.

Belongs to the TMEM132 family.

The protein localises to the membrane. Required for normal inner ear hair cell function and hearing. The sequence is that of Transmembrane protein 132E from Homo sapiens (Human).